The following is a 281-amino-acid chain: uncharacterized protein (281 aa).

Disordered stretches follow at residues 192 to 212 (SNSSVNLSMDKKSDDSKIQET) and 227 to 281 (EDYV…SEEY). Residues 200 to 211 (MDKKSDDSKIQE) show a composition bias toward basic and acidic residues. 2 stretches are compositionally biased toward acidic residues: residues 227-240 (EDYVDGNEDCISDN) and 249-260 (DTDSDLGDLEDP).

This sequence belongs to the cullin family.

This is an uncharacterized protein from Acanthamoeba polyphaga (Amoeba).